The primary structure comprises 381 residues: Dynactin subunit 2 (381 aa).

A disordered region spans residues 15 to 39 (DQPDVYETPDAPESETSDFYDEEPA). The span at 24–39 (DAPESETSDFYDEEPA) shows a compositional bias: acidic residues. Coiled-coil stretches lie at residues 100–216 (QKCL…AVGA) and 350–381 (GVQEAFAQNLENVNKEVKKLDERMKTLQEKVK).

It belongs to the dynactin subunit 2 family. Subunit of dynactin, a multiprotein complex associated with dynein.

It localises to the cytoplasm. The protein resides in the cytoskeleton. The protein localises to the membrane. In terms of biological role, modulates cytoplasmic dynein binding to an organelle, and plays a role in prometaphase chromosome alignment and spindle organization during mitosis. The protein is Dynactin subunit 2 of Aedes aegypti (Yellowfever mosquito).